A 337-amino-acid chain; its full sequence is Holliday junction branch migration complex subunit RuvB (337 aa).

Positions 1-179 (MTHQVSVLHQ…FSFTGRVAYY (179 aa)) are large ATPase domain (RuvB-L). Residues L18, R19, G60, K63, T64, S65, 126-128 (EDY), R169, Y179, and R216 contribute to the ATP site. T64 contributes to the Mg(2+) binding site. The small ATPAse domain (RuvB-S) stretch occupies residues 180-250 (SDEDLATILR…VAEKALAMLL (71 aa)). Positions 253–337 (EWGLNEIDIK…DNLQSLGEEK (85 aa)) are head domain (RuvB-H). DNA contacts are provided by K308 and R313.

It belongs to the RuvB family. As to quaternary structure, homohexamer. Forms an RuvA(8)-RuvB(12)-Holliday junction (HJ) complex. HJ DNA is sandwiched between 2 RuvA tetramers; dsDNA enters through RuvA and exits via RuvB. An RuvB hexamer assembles on each DNA strand where it exits the tetramer. Each RuvB hexamer is contacted by two RuvA subunits (via domain III) on 2 adjacent RuvB subunits; this complex drives branch migration. In the full resolvosome a probable DNA-RuvA(4)-RuvB(12)-RuvC(2) complex forms which resolves the HJ.

It is found in the cytoplasm. It catalyses the reaction ATP + H2O = ADP + phosphate + H(+). Its function is as follows. The RuvA-RuvB-RuvC complex processes Holliday junction (HJ) DNA during genetic recombination and DNA repair, while the RuvA-RuvB complex plays an important role in the rescue of blocked DNA replication forks via replication fork reversal (RFR). RuvA specifically binds to HJ cruciform DNA, conferring on it an open structure. The RuvB hexamer acts as an ATP-dependent pump, pulling dsDNA into and through the RuvAB complex. RuvB forms 2 homohexamers on either side of HJ DNA bound by 1 or 2 RuvA tetramers; 4 subunits per hexamer contact DNA at a time. Coordinated motions by a converter formed by DNA-disengaged RuvB subunits stimulates ATP hydrolysis and nucleotide exchange. Immobilization of the converter enables RuvB to convert the ATP-contained energy into a lever motion, pulling 2 nucleotides of DNA out of the RuvA tetramer per ATP hydrolyzed, thus driving DNA branch migration. The RuvB motors rotate together with the DNA substrate, which together with the progressing nucleotide cycle form the mechanistic basis for DNA recombination by continuous HJ branch migration. Branch migration allows RuvC to scan DNA until it finds its consensus sequence, where it cleaves and resolves cruciform DNA. The polypeptide is Holliday junction branch migration complex subunit RuvB (Chlamydia abortus (strain DSM 27085 / S26/3) (Chlamydophila abortus)).